An 85-amino-acid chain; its full sequence is Cell division topological specificity factor (85 aa).

Belongs to the MinE family.

Prevents the cell division inhibition by proteins MinC and MinD at internal division sites while permitting inhibition at polar sites. This ensures cell division at the proper site by restricting the formation of a division septum at the midpoint of the long axis of the cell. The protein is Cell division topological specificity factor of Xylella fastidiosa (strain M12).